Reading from the N-terminus, the 253-residue chain is Aspartate/glutamate leucyltransferase (253 aa).

This sequence belongs to the R-transferase family. Bpt subfamily.

The protein resides in the cytoplasm. The catalysed reaction is N-terminal L-glutamyl-[protein] + L-leucyl-tRNA(Leu) = N-terminal L-leucyl-L-glutamyl-[protein] + tRNA(Leu) + H(+). It catalyses the reaction N-terminal L-aspartyl-[protein] + L-leucyl-tRNA(Leu) = N-terminal L-leucyl-L-aspartyl-[protein] + tRNA(Leu) + H(+). Functions in the N-end rule pathway of protein degradation where it conjugates Leu from its aminoacyl-tRNA to the N-termini of proteins containing an N-terminal aspartate or glutamate. This Allorhizobium ampelinum (strain ATCC BAA-846 / DSM 112012 / S4) (Agrobacterium vitis (strain S4)) protein is Aspartate/glutamate leucyltransferase.